Reading from the N-terminus, the 146-residue chain is MRQTTILNSTKVEKKWYVIDAQGLVLGRLASKVAMILRGKNKPSYTPHVDCGDNVIILNADKINLSGNKLKGKMYYHHSQHPGGLKRTTAKNMLVKKPIYPVEHAIKGMLPKNKLGSKLFRNLFVYAGNEHPHEAQQPIKLELTNK.

This sequence belongs to the universal ribosomal protein uL13 family. In terms of assembly, part of the 50S ribosomal subunit.

Its function is as follows. This protein is one of the early assembly proteins of the 50S ribosomal subunit, although it is not seen to bind rRNA by itself. It is important during the early stages of 50S assembly. This chain is Large ribosomal subunit protein uL13, found in Spiroplasma citri.